A 137-amino-acid polypeptide reads, in one-letter code: Chaperone protein YscB (137 aa).

In terms of assembly, interacts with SycN to form a complex which specifically binds to YopN.

The protein resides in the cytoplasm. Its subcellular location is the cell inner membrane. Functionally, functions as a specific chaperone for YopN. It could facilitate the secretion and the subsequent translocation of YopN. The protein is Chaperone protein YscB (yscB) of Yersinia pestis.